The primary structure comprises 436 residues: F-box/LRR-repeat protein At2g40920 (436 aa).

One can recognise an F-box domain in the interval 48–98 (EYLLQNFDLDHVMEILMRFPLTSLTRFKCVSKQWSSLISSRYFCNLLYTTV). LRR repeat units lie at residues 276–301 (NCVV…IHLD) and 393–416 (YYNL…WFDK).

The protein is F-box/LRR-repeat protein At2g40920 of Arabidopsis thaliana (Mouse-ear cress).